Reading from the N-terminus, the 485-residue chain is Ribulose bisphosphate carboxylase large chain (485 aa).

The propeptide occupies 1 to 2 (MS). Residue proline 3 is modified to N-acetylproline. Lysine 14 is modified (N6,N6,N6-trimethyllysine). Asparagine 123 and threonine 173 together coordinate substrate. Catalysis depends on lysine 175, which acts as the Proton acceptor. Substrate is bound at residue lysine 177. Residues lysine 201, aspartate 203, and glutamate 204 each contribute to the Mg(2+) site. Lysine 201 bears the N6-carboxylysine mark. The active-site Proton acceptor is histidine 294. Arginine 295, histidine 327, and serine 379 together coordinate substrate.

This sequence belongs to the RuBisCO large chain family. Type I subfamily. Heterohexadecamer of 8 large chains and 8 small chains; disulfide-linked. The disulfide link is formed within the large subunit homodimers. Mg(2+) serves as cofactor. The disulfide bond which can form in the large chain dimeric partners within the hexadecamer appears to be associated with oxidative stress and protein turnover.

It localises to the plastid. The protein resides in the chloroplast. The catalysed reaction is 2 (2R)-3-phosphoglycerate + 2 H(+) = D-ribulose 1,5-bisphosphate + CO2 + H2O. The enzyme catalyses D-ribulose 1,5-bisphosphate + O2 = 2-phosphoglycolate + (2R)-3-phosphoglycerate + 2 H(+). In terms of biological role, ruBisCO catalyzes two reactions: the carboxylation of D-ribulose 1,5-bisphosphate, the primary event in carbon dioxide fixation, as well as the oxidative fragmentation of the pentose substrate in the photorespiration process. Both reactions occur simultaneously and in competition at the same active site. The polypeptide is Ribulose bisphosphate carboxylase large chain (Bartlettina sordida (Purple torch)).